The primary structure comprises 167 residues: Lipoprotein signal peptidase (167 aa).

The next 2 membrane-spanning stretches (helical) occupy residues 67-87 and 91-111; these read WILV…LWRA and LVAL…IDRI. Active-site residues include aspartate 118 and aspartate 136. The chain crosses the membrane as a helical span at residues 127–147; that stretch reads FSWYVFNLADAAIVAGVALLI.

It belongs to the peptidase A8 family.

It localises to the cell inner membrane. The catalysed reaction is Release of signal peptides from bacterial membrane prolipoproteins. Hydrolyzes -Xaa-Yaa-Zaa-|-(S,diacylglyceryl)Cys-, in which Xaa is hydrophobic (preferably Leu), and Yaa (Ala or Ser) and Zaa (Gly or Ala) have small, neutral side chains.. Its pathway is protein modification; lipoprotein biosynthesis (signal peptide cleavage). Its function is as follows. This protein specifically catalyzes the removal of signal peptides from prolipoproteins. This is Lipoprotein signal peptidase from Beijerinckia indica subsp. indica (strain ATCC 9039 / DSM 1715 / NCIMB 8712).